The primary structure comprises 731 residues: Golgin subfamily A member 5 (731 aa).

An N-acetylserine modification is found at Ser2. Residues 2-698 (SWFVDLAGKA…IFLRRYPIAR (697 aa)) are Cytoplasmic-facing. Arg89 bears the Dimethylated arginine mark. A disordered region spans residues 93 to 222 (EASHPVENAS…PTPNDDGKSH (130 aa)). Ser116 is modified (phosphoserine). Positions 134–146 (PTGRVEIRKEKGK) are enriched in basic and acidic residues. Residues 147 to 167 (TPVFQSSQTSSVSSVNPSVTT) are compositionally biased toward low complexity. Positions 173 to 188 (ENSFGSQTHEAASNSD) are enriched in polar residues. The segment covering 189–199 (SSHEGQEESSK) has biased composition (basic and acidic residues). A coiled-coil region spans residues 216 to 632 (NDDGKSHELS…EQQMNSASGS (417 aa)). Residues 699-719 (VFVIIYMALLHLWVMIVLLTY) form a helical; Anchor for type IV membrane protein membrane-spanning segment. Topologically, residues 720-731 (TPEMHHDQPYGK) are lumenal.

Homodimer. Interacts with RAB1A that has been activated by GTP-binding, and possibly also with OCRL1. Interacts with isoform CASP of CUX1. Highly phosphorylated during mitosis. Phosphorylation is barely detectable during interphase. As to expression, ubiquitous. Highly expressed in seminiferous tubules and Leydig cells in testis, and detected at much lower levels in the other tissues tested. Expression is very low or not detectable in spermatozoa.

It is found in the golgi apparatus membrane. Functionally, involved in maintaining Golgi structure. Stimulates the formation of Golgi stacks and ribbons. Involved in intra-Golgi retrograde transport. The sequence is that of Golgin subfamily A member 5 (GOLGA5) from Homo sapiens (Human).